Reading from the N-terminus, the 99-residue chain is Putative septation protein SpoVG (99 aa).

Belongs to the SpoVG family.

Could be involved in septation. In Aster yellows witches'-broom phytoplasma (strain AYWB), this protein is Putative septation protein SpoVG.